The primary structure comprises 432 residues: Adenylosuccinate synthetase (432 aa).

Residues 13–19 (GDEGKGK) and 41–43 (GHT) each bind GTP. Catalysis depends on D14, which acts as the Proton acceptor. D14 and G41 together coordinate Mg(2+). Residues 14–17 (DEGK), 39–42 (NAGH), T130, R144, Q225, T240, and R304 each bind IMP. The active-site Proton donor is the H42. 300-306 (ATTGRSR) serves as a coordination point for substrate. GTP is bound by residues R306, 332-334 (KLD), and 415-417 (STG).

Belongs to the adenylosuccinate synthetase family. Homodimer. It depends on Mg(2+) as a cofactor.

Its subcellular location is the cytoplasm. It carries out the reaction IMP + L-aspartate + GTP = N(6)-(1,2-dicarboxyethyl)-AMP + GDP + phosphate + 2 H(+). It participates in purine metabolism; AMP biosynthesis via de novo pathway; AMP from IMP: step 1/2. Functionally, plays an important role in the de novo pathway of purine nucleotide biosynthesis. Catalyzes the first committed step in the biosynthesis of AMP from IMP. This chain is Adenylosuccinate synthetase, found in Yersinia pestis bv. Antiqua (strain Antiqua).